A 260-amino-acid polypeptide reads, in one-letter code: Hemin import ATP-binding protein HmuV (260 aa).

The 237-residue stretch at 6 to 242 (LSGRNISMKY…ERIEQVYGYR (237 aa)) folds into the ABC transporter domain. 38-45 (GPNGAGKS) serves as a coordination point for ATP.

The protein belongs to the ABC transporter superfamily. Heme (hemin) importer (TC 3.A.1.14.5) family. As to quaternary structure, the complex is composed of two ATP-binding proteins (HmuV), two transmembrane proteins (HmuU) and a solute-binding protein (HmuT).

The protein resides in the cell inner membrane. Part of the ABC transporter complex HmuTUV involved in hemin import. Responsible for energy coupling to the transport system. This Vibrio parahaemolyticus serotype O3:K6 (strain RIMD 2210633) protein is Hemin import ATP-binding protein HmuV.